The following is a 59-amino-acid chain: Large ribosomal subunit protein bL32 (59 aa).

Positions 1–25 are disordered; the sequence is MAVQQNKKSPSKRGMHRAHDFLTAP.

This sequence belongs to the bacterial ribosomal protein bL32 family.

The protein is Large ribosomal subunit protein bL32 of Azoarcus sp. (strain BH72).